Consider the following 1413-residue polypeptide: Leucine-rich repeat receptor protein kinase MSL1 (1413 aa).

Positions 1 to 23 are cleaved as a signal peptide; the sequence is MAPMLSIASRSPSPALIAPHASA. 2 N-linked (GlcNAc...) asparagine glycosylation sites follow: Asn153 and Asn192. 29 LRR repeats span residues 185–209, 210–233, 235–257, 258–281, 282–304, 306–329, 330–353, 354–377, 379–401, 402–425, 427–449, 450–473, 475–497, 498–518, 519–542, 543–565, 567–589, 590–613, 615–636, 637–661, 662–685, 687–709, 710–733, 745–769, 771–793, 794–817, 818–841, 843–866, and 868–890; these read FQSL…MVNL, QHLQ…LFDL, MLKV…IAHL, QQLT…LGSL, KNLE…SFSN, SRLL…IRAL, VNLV…LCQL, KNLQ…IGNL, QLEV…IGNL, EILE…VGEL, NLRQ…LGNC, KKLT…LADL, AVVL…IQNW, SNVS…PGLP, LHLV…ICQG, TFLQ…TFKG, KNLT…YLAL, LPLV…LWES, TILD…SIGK, LLSL…IGAL, RNLT…LFNC, NLVT…ISHL, TKLN…LCVA, VQHI…INNC, ILVE…LAEL, RNIT…PVPL, ASLQ…IGNI, PQIT…LLCK, and SLNH…CHED. N-linked (GlcNAc...) asparagine glycans are attached at residues Asn304 and Asn317. Residues Asn461, Asn496, and Asn499 are each glycosylated (N-linked (GlcNAc...) asparagine). 3 N-linked (GlcNAc...) asparagine glycosylation sites follow: Asn554, Asn568, and Asn601. Residues Asn663 and Asn697 are each glycosylated (N-linked (GlcNAc...) asparagine). N-linked (GlcNAc...) asparagine glycosylation occurs at Asn768. N-linked (GlcNAc...) asparagine glycosylation occurs at Asn795. N-linked (GlcNAc...) asparagine glycosylation is found at Asn878, Asn901, Asn917, and Asn928. 2 LRR repeats span residues 918–942 and 944–966; these read FTKL…IARV and SLYY…ICGM. N-linked (GlcNAc...) asparagine glycosylation is present at Asn973. The helical transmembrane segment at 1016–1036 threads the bilayer; the sequence is TICCIATAIVIVLVVILVVYL. The Protein kinase domain occupies 1107-1401; that stretch reads FDGMHVVGDG…IEAMEYGPLV (295 aa). Residues 1113–1121 and Lys1135 each bind ATP; that span reads VGDGGFGTV. The Proton acceptor role is filled by Asp1234.

This sequence belongs to the protein kinase superfamily. Ser/Thr protein kinase family. In terms of tissue distribution, expressed in roots, leaves, shoots and spikelets.

It is found in the cell membrane. It carries out the reaction L-seryl-[protein] + ATP = O-phospho-L-seryl-[protein] + ADP + H(+). The enzyme catalyses L-threonyl-[protein] + ATP = O-phospho-L-threonyl-[protein] + ADP + H(+). Functionally, receptor-like kinase that may play a role male and female sporogenesis. The polypeptide is Leucine-rich repeat receptor protein kinase MSL1 (Oryza sativa subsp. japonica (Rice)).